Reading from the N-terminus, the 263-residue chain is Protein TILLER ANGLE CONTROL 1 (263 aa).

The short motif at 55–61 (GILAIGT) is the IGT motif element. The disordered stretch occupies residues 243–263 (GKKIHPEQLNGRSNAEGPLTA).

This sequence belongs to the TAC family. In terms of tissue distribution, highly expressed in leaf sheath pulvinus. Expressed in shoot apical meristem and leaves.

Functionally, involved in the regulation of leaf growth angle. Promotes horizontal shoot growth. The chain is Protein TILLER ANGLE CONTROL 1 from Zea mays (Maize).